The primary structure comprises 201 residues: Ribosomal RNA large subunit methyltransferase E (201 aa).

Residues glycine 49, tryptophan 51, aspartate 69, aspartate 90, and aspartate 113 each contribute to the S-adenosyl-L-methionine site. Residue lysine 153 is the Proton acceptor of the active site.

This sequence belongs to the class I-like SAM-binding methyltransferase superfamily. RNA methyltransferase RlmE family.

The protein resides in the cytoplasm. The enzyme catalyses uridine(2552) in 23S rRNA + S-adenosyl-L-methionine = 2'-O-methyluridine(2552) in 23S rRNA + S-adenosyl-L-homocysteine + H(+). Functionally, specifically methylates the uridine in position 2552 of 23S rRNA at the 2'-O position of the ribose in the fully assembled 50S ribosomal subunit. The polypeptide is Ribosomal RNA large subunit methyltransferase E (Desulfotalea psychrophila (strain LSv54 / DSM 12343)).